The primary structure comprises 325 residues: NADH-quinone oxidoreductase subunit H (325 aa).

Helical transmembrane passes span 11–31, 81–101, 114–134, 154–174, 186–206, 237–257, 265–285, and 304–324; these read ILLT…CGAF, VIFT…FAIV, IGIL…LFAG, LSYE…AGSF, VWNV…GVAV, FFVG…TLFF, LPPF…FILI, and ICLP…LWQA.

It belongs to the complex I subunit 1 family. In terms of assembly, NDH-1 is composed of 13 different subunits. Subunits NuoA, H, J, K, L, M, N constitute the membrane sector of the complex.

Its subcellular location is the cell inner membrane. It carries out the reaction a quinone + NADH + 5 H(+)(in) = a quinol + NAD(+) + 4 H(+)(out). Its function is as follows. NDH-1 shuttles electrons from NADH, via FMN and iron-sulfur (Fe-S) centers, to quinones in the respiratory chain. The immediate electron acceptor for the enzyme in this species is believed to be ubiquinone. Couples the redox reaction to proton translocation (for every two electrons transferred, four hydrogen ions are translocated across the cytoplasmic membrane), and thus conserves the redox energy in a proton gradient. This subunit may bind ubiquinone. In Escherichia fergusonii (strain ATCC 35469 / DSM 13698 / CCUG 18766 / IAM 14443 / JCM 21226 / LMG 7866 / NBRC 102419 / NCTC 12128 / CDC 0568-73), this protein is NADH-quinone oxidoreductase subunit H.